Consider the following 261-residue polypeptide: Lytic polysaccharide monooxygenase-like protein X325 (261 aa).

A signal peptide spans 1-17 (MQLSALALATLLATANA). Positions 18, 64, and 133 each coordinate Cu(2+). Disulfide bonds link Cys-39-Cys-139 and Cys-108-Cys-155. 2 N-linked (GlcNAc...) asparagine glycosylation sites follow: Asn-157 and Asn-183. Residues 174-210 (LAENTQGSGNSSGHAHGSSGSGSASASKTDSKSSAAS) form a disordered region. A compositionally biased stretch (low complexity) spans 180 to 210 (GSGNSSGHAHGSSGSGSASASKTDSKSSAAS). The GPI-anchor amidated asparagine moiety is linked to residue Asn-238. A propeptide spans 239–261 (SGSLAYVNGALAIGGVVAAALLI) (removed in mature form).

The protein belongs to the X325 family. Requires Cu(2+) as cofactor.

The protein resides in the cell membrane. Functionally, lytic polysaccharide monooxygenase-like protein that has diverged to biological functions other than polysaccharide degradation since it does not perform oxidative cleavage of polysaccharides. Acts as a cell surface-bound protein that functions in the copper-accumulation pathway. The protein is Lytic polysaccharide monooxygenase-like protein X325 of Yarrowia lipolytica (strain CLIB 122 / E 150) (Yeast).